The primary structure comprises 307 residues: Alpha N-terminal protein methyltransferase 1 (307 aa).

The segment covering 38 to 51 has biased composition (low complexity); the sequence is EPAPAPAAGSNGVA. The segment at 38–60 is disordered; the sequence is EPAPAPAAGSNGVAGEEEAGGGG. S-adenosyl-L-methionine is bound by residues glycine 123, arginine 128, 145-147, 179-180, and glutamine 195; these read EPV and LQ.

This sequence belongs to the methyltransferase superfamily. NTM1 family.

The enzyme catalyses N-terminal L-alanyl-L-prolyl-L-lysyl-[protein] + 3 S-adenosyl-L-methionine = N-terminal N,N,N-trimethyl-L-alanyl-L-prolyl-L-lysyl-[protein] + 3 S-adenosyl-L-homocysteine + 3 H(+). The catalysed reaction is N-terminal L-seryl-L-prolyl-L-lysyl-[protein] + 3 S-adenosyl-L-methionine = N-terminal N,N,N-trimethyl-L-seryl-L-prolyl-L-lysyl-[protein] + 3 S-adenosyl-L-homocysteine + 3 H(+). It carries out the reaction N-terminal L-prolyl-L-prolyl-L-lysyl-[protein] + 2 S-adenosyl-L-methionine = N-terminal N,N-dimethyl-L-prolyl-L-prolyl-L-lysyl-[protein] + 2 S-adenosyl-L-homocysteine + 2 H(+). Functionally, alpha-N-methyltransferase that methylates the N-terminus of target proteins containing the N-terminal motif [Ala/Pro/Ser]-Pro-Lys when the initiator Met is cleaved. Specifically catalyzes mono-, di- or tri-methylation of exposed alpha-amino group of Ala or Ser residue in the [Ala/Ser]-Pro-Lys motif and mono- or di-methylation of Pro in the Pro-Pro-Lys motif. This chain is Alpha N-terminal protein methyltransferase 1, found in Oryza sativa subsp. japonica (Rice).